Here is a 756-residue protein sequence, read N- to C-terminus: 5-methyltetrahydropteroyltriglutamate--homocysteine methyltransferase (756 aa).

5-methyltetrahydropteroyltri-L-glutamate-binding positions include 16–19 and K112; that span reads RELK. L-homocysteine-binding positions include 432–434 and E485; that span reads IGS. Residues 432–434 and E485 each bind L-methionine; that span reads IGS. Residues 516 to 517 and W562 each bind 5-methyltetrahydropteroyltri-L-glutamate; that span reads RC. Residue D600 coordinates L-homocysteine. D600 contributes to the L-methionine binding site. 5-methyltetrahydropteroyltri-L-glutamate is bound at residue E606. H642, C644, and E666 together coordinate Zn(2+). H695 (proton donor) is an active-site residue. Residue C727 coordinates Zn(2+).

The protein belongs to the vitamin-B12 independent methionine synthase family. The cofactor is Zn(2+).

It catalyses the reaction 5-methyltetrahydropteroyltri-L-glutamate + L-homocysteine = tetrahydropteroyltri-L-glutamate + L-methionine. It participates in amino-acid biosynthesis; L-methionine biosynthesis via de novo pathway; L-methionine from L-homocysteine (MetE route): step 1/1. Catalyzes the transfer of a methyl group from 5-methyltetrahydrofolate to homocysteine resulting in methionine formation. The polypeptide is 5-methyltetrahydropteroyltriglutamate--homocysteine methyltransferase (Haemophilus influenzae (strain PittGG)).